The sequence spans 51 residues: Large ribosomal subunit protein bL33 (51 aa).

It belongs to the bacterial ribosomal protein bL33 family.

The protein is Large ribosomal subunit protein bL33 of Pseudomonas putida (strain ATCC 47054 / DSM 6125 / CFBP 8728 / NCIMB 11950 / KT2440).